The following is a 210-amino-acid chain: Ion-translocating oxidoreductase complex subunit G (210 aa).

The chain crosses the membrane as a helical span at residues 9–29 (SLVLALFAIAATALVTITYAL). Position 176 is an FMN phosphoryl threonine (Thr176).

The protein belongs to the RnfG family. The complex is composed of six subunits: RnfA, RnfB, RnfC, RnfD, RnfE and RnfG. FMN is required as a cofactor.

The protein localises to the cell inner membrane. Its function is as follows. Part of a membrane-bound complex that couples electron transfer with translocation of ions across the membrane. The sequence is that of Ion-translocating oxidoreductase complex subunit G from Aliivibrio fischeri (strain MJ11) (Vibrio fischeri).